We begin with the raw amino-acid sequence, 1067 residues long: Sal-like protein 4 (1067 aa).

A disordered region spans residues 1–62 (MSRRKQAKPQ…SEDSIPVKRP (62 aa)). The span at 15 to 42 (EEGQGEQPQQLPSPDLAEALAAEEPGAP) shows a compositional bias: low complexity. The residue at position 53 (S53) is a Phosphoserine. The segment at 68-90 (HICNKCCAEFFSLSEFMEHKKSC) adopts a C2H2-type 1; atypical zinc-finger fold. Residues 115–140 (ALSHQLGSPSNKDSLQENGSSSGDLK) are disordered. The segment covering 119 to 137 (QLGSPSNKDSLQENGSSSG) has biased composition (polar residues). A Glycyl lysine isopeptide (Lys-Gly) (interchain with G-Cter in SUMO1); alternate cross-link involves residue K151. K151 participates in a covalent cross-link: Glycyl lysine isopeptide (Lys-Gly) (interchain with G-Cter in SUMO2); alternate. Glycyl lysine isopeptide (Lys-Gly) (interchain with G-Cter in SUMO2) cross-links involve residues K170, K185, and K291. Phosphoserine is present on S308. Residue K317 forms a Glycyl lysine isopeptide (Lys-Gly) (interchain with G-Cter in SUMO1); alternate linkage. K317 is covalently cross-linked (Glycyl lysine isopeptide (Lys-Gly) (interchain with G-Cter in SUMO2); alternate). Residue K377 forms a Glycyl lysine isopeptide (Lys-Gly) (interchain with G-Cter in SUMO2) linkage. A Glycyl lysine isopeptide (Lys-Gly) (interchain with G-Cter in SUMO1); alternate cross-link involves residue K379. A Glycyl lysine isopeptide (Lys-Gly) (interchain with G-Cter in SUMO2); alternate cross-link involves residue K379. C2H2-type zinc fingers lie at residues 387–409 (HKCR…LRSH) and 415–437 (YVCP…LQRH). K441 participates in a covalent cross-link: Glycyl lysine isopeptide (Lys-Gly) (interchain with G-Cter in SUMO2). Residues 471 to 521 (DESSLSVDAEPVPVTGTPSLGLPQKLTSGPNSRDLMGGSLPNDMQPGPSPE) are disordered. Residue K557 forms a Glycyl lysine isopeptide (Lys-Gly) (interchain with G-Cter in SUMO2) linkage. 2 consecutive C2H2-type zinc fingers follow at residues 573-595 (NECL…YRTH) and 601-623 (FQCK…LGVH). Residues K604 and K630 each participate in a glycyl lysine isopeptide (Lys-Gly) (interchain with G-Cter in SUMO2) cross-link. The C2H2-type 6 zinc-finger motif lies at 633 to 655 (HSCPICQKKFTNAVMLQQHIRMH). Disordered stretches follow at residues 682–716 (ENGS…STVS) and 752–835 (RQSS…SLPP). The segment covering 693–704 (DAAEGMEAEEVC) has biased composition (acidic residues). Composition is skewed to polar residues over residues 707-716 (DVPSGPSTVS) and 752-761 (RQSSRENSSL). S785 and S798 each carry phosphoserine. Polar residues predominate over residues 798-809 (SPANSQAGSVKS). Residues 810–829 (RSPEGHKAEGVESCRVDTEG) show a composition bias toward basic and acidic residues. A Glycyl lysine isopeptide (Lys-Gly) (interchain with G-Cter in SUMO1); alternate cross-link involves residue K846. A Glycyl lysine isopeptide (Lys-Gly) (interchain with G-Cter in SUMO2); alternate cross-link involves residue K846. Residues 880–902 (HCCTRCGKNFSSASALQIHERTH) form a C2H2-type 7 zinc finger. A Glycyl lysine isopeptide (Lys-Gly) (interchain with G-Cter in SUMO2) cross-link involves residue K906. A C2H2-type 8 zinc finger spans residues 908 to 930 (FVCNICGRAFTTKGNLKVHYMTH). Residues K942 and K957 each participate in a glycyl lysine isopeptide (Lys-Gly) (interchain with G-Cter in SUMO2) cross-link. S1029 is modified (phosphoserine).

It belongs to the sal C2H2-type zinc-finger protein family. Interacts with POU5F1/OCT4. Interacts with NANOG. Interacts with BEND3. Interacts with NSD2 (via PHD-type zinc fingers 1, 2 and 3). Interacts with NRBP1. Post-translationally, sumoylation with both SUMO1 and SUMO2 regulates the stability, subcellular localization, transcriptional activity, and may reduce interaction with POU5F1/OCT4.

Its subcellular location is the cytoplasm. It localises to the nucleus. Its function is as follows. Transcription factor with a key role in the maintenance and self-renewal of embryonic and hematopoietic stem cells. The protein is Sal-like protein 4 (Sall4) of Mus musculus (Mouse).